Reading from the N-terminus, the 333-residue chain is Cell division protein ZipA (333 aa).

At 1-5 (MQELR) the chain is on the periplasmic side. The chain crosses the membrane as a helical span at residues 6-26 (LVLILVGALAIAALLFHGLWT). Residues 27–333 (SRKETSSKFG…KQRVKVFCRK (307 aa)) are Cytoplasmic-facing. Residues 72 to 81 (KEPAFAREEV) are compositionally biased toward basic and acidic residues. The tract at residues 72-119 (KEPAFAREEVPTSDDPLFEGTVSSESNKFTQQEKPTVQQAQPQPQPQP) is disordered. Polar residues predominate over residues 92 to 107 (TVSSESNKFTQQEKPT). Low complexity predominate over residues 108 to 119 (VQQAQPQPQPQP).

It belongs to the ZipA family. In terms of assembly, interacts with FtsZ via their C-terminal domains.

It localises to the cell inner membrane. In terms of biological role, essential cell division protein that stabilizes the FtsZ protofilaments by cross-linking them and that serves as a cytoplasmic membrane anchor for the Z ring. Also required for the recruitment to the septal ring of downstream cell division proteins. The sequence is that of Cell division protein ZipA from Aliivibrio fischeri (strain ATCC 700601 / ES114) (Vibrio fischeri).